The following is a 201-amino-acid chain: Ras-related protein Rab-1B (201 aa).

The residue at position 1 (Met1) is an N-acetylmethionine. GTP contacts are provided by Ser17, Gly18, Val19, Gly20, Lys21, Ser22, Cys23, Tyr33, Thr34, Glu35, Ser36, Ser39, and Thr40. Ser22 contacts Mg(2+). The Switch 1 signature appears at 30 to 45 (DDTYTESYISTIGVDF). 2 residues coordinate Mg(2+): Thr40 and Asp63. Residues 64-83 (TAGQERFRTVTSSYYRGAHG) form a switch 2 region; required for interaction with REP1/CHM region. Residues 65–80 (AGQERFRTVTSSYYRG) carry the Switch 2 motif. GTP is bound by residues Gly66, Asn121, Lys122, Asp124, Ser151, Ala152, and Lys153. Residues 173 to 201 (MGPGAASGGERPNLKIDSTPVKSASGGCC) are disordered. 2 S-geranylgeranyl cysteine lipidation sites follow: Cys200 and Cys201. Residue Cys201 is modified to Cysteine methyl ester.

It belongs to the small GTPase superfamily. Rab family. In terms of assembly, interacts with MICAL1 and MICAL2. Interacts (in GTP-bound form) with MICALCL, MICAL1 and MILCAL3. Interacts with GDI1; the interaction requires the GDP-bound state. Interacts with CHM/REP1; the interaction requires the GDP-bound form and is necessary for prenylation by GGTase II. Interacts with RabGAP TBC1D20. Interacts (in GDP-bound form) with lipid phosphatase MTMR6 (via GRAM domain); the interaction regulates MTMR6 recruitment to the endoplasmic reticulum-Golgi intermediate compartment. Interacts (in GDP-bound form) with lipid phosphatase MTMR7. Requires Mg(2+) as cofactor. In terms of processing, prenylated; by GGTase II, only after interaction of the substrate with Rab escort protein 1 (REP1).

Its subcellular location is the cytoplasm. It localises to the membrane. The protein localises to the preautophagosomal structure membrane. It is found in the perinuclear region. It carries out the reaction GTP + H2O = GDP + phosphate + H(+). Regulated by guanine nucleotide exchange factors (GEFs) which promote the exchange of bound GDP for free GTP. Regulated by GTPase activating proteins (GAPs) including TBC1D20 which increases the GTP hydrolysis activity. Inhibited by GDP dissociation inhibitors (GDIs). Its function is as follows. The small GTPases Rab are key regulators of intracellular membrane trafficking, from the formation of transport vesicles to their fusion with membranes. Rabs cycle between an inactive GDP-bound form and an active GTP-bound form that is able to recruit to membranes different set of downstream effectors directly responsible for vesicle formation, movement, tethering and fusion. Plays a role in the initial events of the autophagic vacuole development which take place at specialized regions of the endoplasmic reticulum. Regulates vesicular transport between the endoplasmic reticulum and successive Golgi compartments. Required to modulate the compacted morphology of the Golgi. Promotes the recruitment of lipid phosphatase MTMR6 to the endoplasmic reticulum-Golgi intermediate compartment. The protein is Ras-related protein Rab-1B (Rab1b) of Rattus norvegicus (Rat).